Here is a 388-residue protein sequence, read N- to C-terminus: Lipid-A-disaccharide synthase (388 aa).

Belongs to the LpxB family.

It catalyses the reaction a lipid X + a UDP-2-N,3-O-bis[(3R)-3-hydroxyacyl]-alpha-D-glucosamine = a lipid A disaccharide + UDP + H(+). It functions in the pathway bacterial outer membrane biogenesis; LPS lipid A biosynthesis. Functionally, condensation of UDP-2,3-diacylglucosamine and 2,3-diacylglucosamine-1-phosphate to form lipid A disaccharide, a precursor of lipid A, a phosphorylated glycolipid that anchors the lipopolysaccharide to the outer membrane of the cell. This is Lipid-A-disaccharide synthase from Burkholderia pseudomallei (strain 1710b).